The sequence spans 1383 residues: DNA-directed RNA polymerase subunit beta (1383 aa).

The protein belongs to the RNA polymerase beta chain family. As to quaternary structure, the RNAP catalytic core consists of 2 alpha, 1 beta, 1 beta' and 1 omega subunit. When a sigma factor is associated with the core the holoenzyme is formed, which can initiate transcription.

The enzyme catalyses RNA(n) + a ribonucleoside 5'-triphosphate = RNA(n+1) + diphosphate. Functionally, DNA-dependent RNA polymerase catalyzes the transcription of DNA into RNA using the four ribonucleoside triphosphates as substrates. The polypeptide is DNA-directed RNA polymerase subunit beta (Xanthomonas axonopodis pv. citri (strain 306)).